An 891-amino-acid chain; its full sequence is Receptor-like protein 50 (891 aa).

A signal peptide spans 1 to 22; it reads MITIIWSLCLIFCLSNSILVIA. The Extracellular segment spans residues 23–849; the sequence is KDLCLPDQRD…KEEKDKGLSW (827 aa). Residues Asn62 and Asn98 are each glycosylated (N-linked (GlcNAc...) asparagine). 7 LRR repeats span residues 105-130, 132-152, 153-176, 177-201, 203-225, 226-249, and 250-272; these read QHLQ…NFKY, RVLN…LRSL, SYLT…SMGN, LKHL…LGNL, YLTD…MGNL, KSLR…LGSL, and SNLT…SMSS. An N-linked (GlcNAc...) asparagine glycan is attached at Asn200. Residues Asn251, Asn285, and Asn306 are each glycosylated (N-linked (GlcNAc...) asparagine). LRR repeat units lie at residues 286–309, 310–334, 336–358, and 359–383; these read LSSL…NMSS, LSKL…LFML, SLIK…NISS, and PSNL…ILKL. Asn355 carries N-linked (GlcNAc...) asparagine glycosylation. The LRR 12; degenerate repeat unit spans residues 384 to 407; sequence VGLSALSLSFWDTGGIVDFSIFLQ. LRR repeat units lie at residues 408-436, 438-453, 454-477, 478-504, 506-519, 520-544, 545-568, 570-591, 593-614, 615-641, 642-665, 712-736, 737-760, 761-784, and 786-809; these read LKSL…MMHL, LSSC…LENQ, TSLY…LWRL, PTLR…IYSF, ASDN…PRAV, CEIG…EISN, KTLS…SLHG, LRSL…LINC, YLQF…WLKS, LPNL…SLSF, SKLR…YFVG, FEIY…IGIL, KELI…LSNL, SNLQ…LGEL, and FLAR…QIQS. N-linked (GlcNAc...) asparagine glycans are attached at residues Asn422, Asn442, and Asn452. Residues Asn531, Asn544, Asn554, Asn590, and Asn605 are each glycosylated (N-linked (GlcNAc...) asparagine). N-linked (GlcNAc...) asparagine glycans are attached at residues Asn743 and Asn759. Residues Asn791 and Asn811 are each glycosylated (N-linked (GlcNAc...) asparagine). A helical transmembrane segment spans residues 850-870; the sequence is VAAAIGYVPGLFCGLAIGHIL. Residues 871–891 are Cytoplasmic-facing; it reads TSYKRDWFMRIFSCFSSPLKK.

This sequence belongs to the RLP family.

The protein resides in the cell membrane. This Arabidopsis thaliana (Mouse-ear cress) protein is Receptor-like protein 50.